We begin with the raw amino-acid sequence, 594 residues long: UvrABC system protein C (594 aa).

Positions Asp14–Ile91 constitute a GIY-YIG domain. In terms of domain architecture, UVR spans Lys196 to Ile231.

Belongs to the UvrC family. Interacts with UvrB in an incision complex.

It is found in the cytoplasm. Its function is as follows. The UvrABC repair system catalyzes the recognition and processing of DNA lesions. UvrC both incises the 5' and 3' sides of the lesion. The N-terminal half is responsible for the 3' incision and the C-terminal half is responsible for the 5' incision. The sequence is that of UvrABC system protein C from Bacillus thuringiensis (strain Al Hakam).